Here is a 124-residue protein sequence, read N- to C-terminus: MSVKYFEPEEIVEHNNSKDMYMVINGKVYDVSNFADDHPGGLDIMLDYAGQDATKAYQDIGHSIAADELLEEMYIGDLKPGTEERLKELKKPRSFDNDTPPLPLLIALIVLPAIAVIVFVKLNK.

The Cytochrome b5 heme-binding domain occupies 3 to 79 (VKYFEPEEIV…LEEMYIGDLK (77 aa)). Residues histidine 38 and histidine 62 each contribute to the heme site. A helical transmembrane segment spans residues 100–120 (PPLPLLIALIVLPAIAVIVFV).

It belongs to the cytochrome b5 family.

It is found in the endoplasmic reticulum membrane. The protein localises to the microsome membrane. Functionally, membrane bound hemoprotein which function as an electron carrier for several membrane bound oxygenases. In Schizosaccharomyces pombe (strain 972 / ATCC 24843) (Fission yeast), this protein is Probable cytochrome b5 1.